A 371-amino-acid chain; its full sequence is tRNA N6-adenosine threonylcarbamoyltransferase (371 aa).

The Fe cation site is built by histidine 110 and histidine 114. Substrate contacts are provided by residues 132–136, aspartate 165, glycine 178, aspartate 182, and asparagine 289; that span reads LVSGG. Aspartate 317 serves as a coordination point for Fe cation.

This sequence belongs to the KAE1 / TsaD family. It depends on Fe(2+) as a cofactor.

Its subcellular location is the cytoplasm. The catalysed reaction is L-threonylcarbamoyladenylate + adenosine(37) in tRNA = N(6)-L-threonylcarbamoyladenosine(37) in tRNA + AMP + H(+). Required for the formation of a threonylcarbamoyl group on adenosine at position 37 (t(6)A37) in tRNAs that read codons beginning with adenine. Is involved in the transfer of the threonylcarbamoyl moiety of threonylcarbamoyl-AMP (TC-AMP) to the N6 group of A37, together with TsaE and TsaB. TsaD likely plays a direct catalytic role in this reaction. This chain is tRNA N6-adenosine threonylcarbamoyltransferase, found in Solidesulfovibrio magneticus (strain ATCC 700980 / DSM 13731 / RS-1) (Desulfovibrio magneticus).